Consider the following 232-residue polypeptide: Large ribosomal subunit protein uL1 (232 aa).

The protein belongs to the universal ribosomal protein uL1 family. As to quaternary structure, part of the 50S ribosomal subunit.

Its function is as follows. Binds directly to 23S rRNA. The L1 stalk is quite mobile in the ribosome, and is involved in E site tRNA release. In terms of biological role, protein L1 is also a translational repressor protein, it controls the translation of the L11 operon by binding to its mRNA. This is Large ribosomal subunit protein uL1 from Aliarcobacter butzleri (strain RM4018) (Arcobacter butzleri).